Reading from the N-terminus, the 599-residue chain is MKNIRNFSIIAHIDHGKSTLSDRIIQICGGLSDREMEAQVLDSMDLERERGITIKAQSVTLDFKASDGETYQLNFIDTPGHVDFSYEVSRSLAACEGALLVVDAGQGVEAQTLANCYTAMEMDLEVVPVLNKIDLPAADPERVAEEIEDIVGIDATDAVRCSAKTGVGVTDVLERLVRDIPPPQGDPDGPLQALIIDSWFDNYLGVVSLVRIKNGTMRKGDKIKVMSTGQTYNADRLGIFTPKQVDRTELKCGEVGWLVCAIKDILGAPVGDTLTSARNPAEKALPGFKKVKPQVYAGLFPVSSDDYESFRDALGKLSLNDASLFYEPESSSALGFGFRCGFLGLLHMEIIQERLEREYDLDLITTAPTVVYEVETTAKETIYVDSPSKLPPLNNIYELREPIAECHMLLPQAYLGNVITLCIEKRGVQTNMVYHGNQVALTYEIPMAEVVLDFFDRLKSTSRGYASLDYNFKRFQASDMVRVDVLINNERVDALALITHRDNSQSRGRELVEKMKDLIPRQQFDIAIQAAIGTHIIARSTVKQLRKNVLAKCYGGDISRKKKLLQKQKEGKKRMKRIGNVELPQEAFLAILHVGKDNR.

A tr-type G domain is found at 2–184 (KNIRNFSIIA…RLVRDIPPPQ (183 aa)). GTP contacts are provided by residues 14–19 (DHGKST) and 131–134 (NKID).

It belongs to the TRAFAC class translation factor GTPase superfamily. Classic translation factor GTPase family. LepA subfamily.

It is found in the cell inner membrane. It carries out the reaction GTP + H2O = GDP + phosphate + H(+). Functionally, required for accurate and efficient protein synthesis under certain stress conditions. May act as a fidelity factor of the translation reaction, by catalyzing a one-codon backward translocation of tRNAs on improperly translocated ribosomes. Back-translocation proceeds from a post-translocation (POST) complex to a pre-translocation (PRE) complex, thus giving elongation factor G a second chance to translocate the tRNAs correctly. Binds to ribosomes in a GTP-dependent manner. In Salmonella gallinarum (strain 287/91 / NCTC 13346), this protein is Elongation factor 4.